A 354-amino-acid chain; its full sequence is Histidinol-phosphate aminotransferase (354 aa).

Lys-210 carries the post-translational modification N6-(pyridoxal phosphate)lysine.

It belongs to the class-II pyridoxal-phosphate-dependent aminotransferase family. Histidinol-phosphate aminotransferase subfamily. In terms of assembly, homodimer. The cofactor is pyridoxal 5'-phosphate.

It catalyses the reaction L-histidinol phosphate + 2-oxoglutarate = 3-(imidazol-4-yl)-2-oxopropyl phosphate + L-glutamate. It functions in the pathway amino-acid biosynthesis; L-histidine biosynthesis; L-histidine from 5-phospho-alpha-D-ribose 1-diphosphate: step 7/9. This Clostridium botulinum (strain Okra / Type B1) protein is Histidinol-phosphate aminotransferase.